Reading from the N-terminus, the 236-residue chain is Leucyl/phenylalanyl-tRNA--protein transferase (236 aa).

It belongs to the L/F-transferase family.

Its subcellular location is the cytoplasm. It carries out the reaction N-terminal L-lysyl-[protein] + L-leucyl-tRNA(Leu) = N-terminal L-leucyl-L-lysyl-[protein] + tRNA(Leu) + H(+). The catalysed reaction is N-terminal L-arginyl-[protein] + L-leucyl-tRNA(Leu) = N-terminal L-leucyl-L-arginyl-[protein] + tRNA(Leu) + H(+). It catalyses the reaction L-phenylalanyl-tRNA(Phe) + an N-terminal L-alpha-aminoacyl-[protein] = an N-terminal L-phenylalanyl-L-alpha-aminoacyl-[protein] + tRNA(Phe). Functionally, functions in the N-end rule pathway of protein degradation where it conjugates Leu, Phe and, less efficiently, Met from aminoacyl-tRNAs to the N-termini of proteins containing an N-terminal arginine or lysine. In Vibrio atlanticus (strain LGP32) (Vibrio splendidus (strain Mel32)), this protein is Leucyl/phenylalanyl-tRNA--protein transferase.